The primary structure comprises 360 residues: Cell division protein DivIB (360 aa).

Positions 1-54 are disordered; the sequence is MTEKDSNVEESVLEVEQASQVELDSEQISPAEKESVLAEEKEFSTDVDIPEMTA. At 1-139 the chain is on the cytoplasmic side; it reads MTEKDSNVEE…VDIPSKVVWK (139 aa). A compositionally biased stretch (polar residues) spans 17 to 28; it reads QASQVELDSEQI. Residues 31 to 44 are compositionally biased toward basic and acidic residues; it reads AEKESVLAEEKEFS. A helical membrane pass occupies residues 140 to 160; it reads AIPVLVTSLLLAALALYFISP. Residues 161 to 360 lie on the Extracellular side of the membrane; it reads TSKKKQIEVV…MEVGIYRYAS (200 aa). The 72-residue stretch at 162 to 233 folds into the POTRA domain; it reads SKKKQIEVVG…ATFTIHIKEY (72 aa).

This sequence belongs to the FtsQ/DivIB family. DivIB subfamily.

The protein localises to the cell membrane. Its function is as follows. Cell division protein that may be involved in stabilizing or promoting the assembly of the division complex. The protein is Cell division protein DivIB of Streptococcus suis (strain GZ1).